Reading from the N-terminus, the 656-residue chain is Rab proteins geranylgeranyltransferase component A 2 (656 aa).

Disordered regions lie at residues 188–209 (MHTV…EDKA) and 609–656 (PPPN…HLQN). Residues 639-656 (ESSEESKNLESPEKHLQN) show a composition bias toward basic and acidic residues. A Phosphoserine modification is found at S649.

The protein belongs to the Rab GDI family. Monomer. Heterotrimer composed of RABGGTA, RABGGTB and CHML; within this trimer, RABGGTA and RABGGTB form the catalytic component B, while CHML (component A) mediates Rab protein binding. Interacts with RAB1A, RAB7A and RAB27A, but has much lower affinity for RAB1A, RAB7A and RAB27A than CHM. Interacts with the non-phosphorylated forms of RAB3A, RAB3B, RAB3C, RAB3D, RAB5B, RAB5C, RAB8A, RAB8B, RAB10, RAB12, RAB35, and RAB43.

It localises to the cytoplasm. Its subcellular location is the cytosol. Functionally, substrate-binding subunit (component A) of the Rab geranylgeranyltransferase (GGTase) complex. Binds unprenylated Rab proteins and presents the substrate peptide to the catalytic component B. The component A is thought to be regenerated by transferring its prenylated Rab back to the donor membrane. Less effective than CHM in supporting prenylation of Rab3 family. This Homo sapiens (Human) protein is Rab proteins geranylgeranyltransferase component A 2 (CHML).